Consider the following 167-residue polypeptide: Ubiquitin-fold modifier-conjugating enzyme 1 (167 aa).

Cysteine 116 functions as the Glycyl thioester intermediate in the catalytic mechanism. Lysine 122 is covalently cross-linked (Glycyl lysine isopeptide (Lys-Gly) (interchain with G-Cter in UFM1)).

Belongs to the ubiquitin-conjugating enzyme family. UFC1 subfamily. In terms of assembly, interacts with UBA5 (via C-terminus). Interacts with UFL1. Interacts with UFM1. Interacts with KIRREL3. Ufmylated at Lys-122. Deufmylated by UFSP1.

E2-like enzyme which specifically catalyzes the second step in ufmylation. Accepts the ubiquitin-like modifier UFM1 from the E1 enzyme UBA5 and forms an intermediate with UFM1 via a thioester linkage. Ufmylation is involved in various processes, such as ribosome recycling, response to DNA damage, interferon response or reticulophagy (also called ER-phagy). This is Ubiquitin-fold modifier-conjugating enzyme 1 from Homo sapiens (Human).